Reading from the N-terminus, the 339-residue chain is N-acetyl-gamma-glutamyl-phosphate reductase (339 aa).

Residue cysteine 144 is part of the active site.

The protein belongs to the NAGSA dehydrogenase family. Type 1 subfamily.

The protein resides in the cytoplasm. It catalyses the reaction N-acetyl-L-glutamate 5-semialdehyde + phosphate + NADP(+) = N-acetyl-L-glutamyl 5-phosphate + NADPH + H(+). The protein operates within amino-acid biosynthesis; L-arginine biosynthesis; N(2)-acetyl-L-ornithine from L-glutamate: step 3/4. Catalyzes the NADPH-dependent reduction of N-acetyl-5-glutamyl phosphate to yield N-acetyl-L-glutamate 5-semialdehyde. The polypeptide is N-acetyl-gamma-glutamyl-phosphate reductase (Methanobrevibacter smithii (strain ATCC 35061 / DSM 861 / OCM 144 / PS)).